The chain runs to 476 residues: Adenosylhomocysteinase (476 aa).

The substrate site is built by threonine 61, aspartate 140, and glutamate 200. Residue 201-203 participates in NAD(+) binding; the sequence is TTT. Substrate-binding residues include lysine 230 and aspartate 234. Residues asparagine 235, 264–269, glutamate 287, asparagine 322, 343–345, and asparagine 389 each bind NAD(+); these read GYGDVG and IGH.

Belongs to the adenosylhomocysteinase family. It depends on NAD(+) as a cofactor.

The protein resides in the cytoplasm. The enzyme catalyses S-adenosyl-L-homocysteine + H2O = L-homocysteine + adenosine. It participates in amino-acid biosynthesis; L-homocysteine biosynthesis; L-homocysteine from S-adenosyl-L-homocysteine: step 1/1. Its function is as follows. May play a key role in the regulation of the intracellular concentration of adenosylhomocysteine. This Acidovorax ebreus (strain TPSY) (Diaphorobacter sp. (strain TPSY)) protein is Adenosylhomocysteinase.